We begin with the raw amino-acid sequence, 1408 residues long: Protein patched homolog 1 (1408 aa).

The disordered stretch occupies residues 1-20 (MLTLLEPPGAKRSPTVGNYN). Residues 1–136 (MLTLLEPPGA…GNTVHRNAWS (136 aa)) lie on the Cytoplasmic side of the membrane. A helical membrane pass occupies residues 137 to 157 (IILAVSMIFAVCCYGLQYVHI). The Extracellular segment spans residues 158–649 (ETDIVKLWVA…STSIADMLEE (492 aa)). The interval 455–479 (STAPIPTTTTLSPEEARAAEEKEKK) is disordered. Over residues 468–479 (EEARAAEEKEKK) the composition is skewed to basic and acidic residues. N-linked (GlcNAc...) asparagine glycosylation occurs at N599. A helical membrane pass occupies residues 650–670 (FCQFNYTIILAGYALMLAYAI). The SSD domain occupies 654 to 816 (NYTIILAGYA…LTIYPAIISI (163 aa)). Residues 671 to 686 (VTQARFDNCLPATESS) are Cytoplasmic-facing. Residues 687–707 (MGLALAGVLVVTFASVAGLGL) form a helical membrane-spanning segment. Residues 708–709 (AT) are Extracellular-facing. The chain crosses the membrane as a helical span at residues 710–730 (WFGIEFNAATTQIVPFLTLGI). Residues 731–765 (GVDNMFMLLHNYRDVVKLAGGHAEMAILMRETGMS) lie on the Cytoplasmic side of the membrane. A helical membrane pass occupies residues 766-786 (ILCTSINNILSFLTGTLLPIP). At 787–795 (ALRSFCAQS) the chain is on the extracellular side. A helical membrane pass occupies residues 796-816 (SILLTFNFIAILTIYPAIISI). At 817-901 (DLRRKKAQRR…YYYIPFISKP (85 aa)) the chain is on the cytoplasmic side. A helical transmembrane segment spans residues 902–922 (ASKVAIIVGCCALLGASFIGM). The Extracellular portion of the chain corresponds to 923–1175 (RQSTLGLELG…QGIAFTFWEQ (253 aa)). 2 N-linked (GlcNAc...) asparagine glycosylation sites follow: N1026 and N1036. Residues 1176 to 1196 (YLFLTGNLMQAISIITISVFC) traverse the membrane as a helical segment. Topologically, residues 1197 to 1217 (VISVLLFNPWAALMVVCILGI) are cytoplasmic. Transmembrane regions (helical) follow at residues 1218 to 1238 (MTCE…PVSA) and 1239 to 1259 (VTLI…VVSF). At 1260 to 1276 (LTALGTRSQRTSSAVDR) the chain is on the extracellular side. The chain crosses the membrane as a helical span at residues 1277-1297 (VFVPVIHGSFSTLLGILMLGF). Residues 1298–1305 (SEFEFVVK) lie on the Cytoplasmic side of the membrane. The helical transmembrane segment at 1306-1326 (YFFIVMTALICIGIINGLILL) threads the bilayer. At 1327–1408 (PVLLSWFGPR…GNNTRRLPAV (82 aa)) the chain is on the extracellular side. A disordered region spans residues 1342 to 1408 (TGGKTTLTLP…GNNTRRLPAV (67 aa)). Residues 1387–1408 (TTRTSGGNRGTVGNNTRRLPAV) show a composition bias toward low complexity.

Belongs to the patched family. As to expression, germ line and its progenitors.

The protein localises to the membrane. Functionally, required but not essential for cytokinesis of mitotically proliferating germ cells. The sequence is that of Protein patched homolog 1 (ptc-1) from Caenorhabditis elegans.